We begin with the raw amino-acid sequence, 84 residues long: NAD(P)H-quinone oxidoreductase subunit O (84 aa).

Belongs to the complex I NdhO subunit family. As to quaternary structure, NDH-1 can be composed of about 15 different subunits; different subcomplexes with different compositions have been identified which probably have different functions.

It localises to the cellular thylakoid membrane. It carries out the reaction a plastoquinone + NADH + (n+1) H(+)(in) = a plastoquinol + NAD(+) + n H(+)(out). The catalysed reaction is a plastoquinone + NADPH + (n+1) H(+)(in) = a plastoquinol + NADP(+) + n H(+)(out). Its function is as follows. NDH-1 shuttles electrons from an unknown electron donor, via FMN and iron-sulfur (Fe-S) centers, to quinones in the respiratory and/or the photosynthetic chain. The immediate electron acceptor for the enzyme in this species is believed to be plastoquinone. Couples the redox reaction to proton translocation, and thus conserves the redox energy in a proton gradient. Cyanobacterial NDH-1 also plays a role in inorganic carbon-concentration. The sequence is that of NAD(P)H-quinone oxidoreductase subunit O from Synechococcus sp. (strain CC9902).